We begin with the raw amino-acid sequence, 261 residues long: UPF0177 protein YvdC (261 aa).

A run of 6 helical transmembrane segments spans residues 15–35 (WVIV…IFHL), 43–63 (VLSI…VLFI), 84–104 (LDTV…YLIA), 123–143 (IIIG…FAQI), 197–217 (YFAF…TDLY), and 239–259 (FYLN…IALV).

This sequence belongs to the UPF0177 family.

The protein resides in the cell membrane. The protein is UPF0177 protein YvdC (yvdC) of Lactococcus lactis subsp. lactis (strain IL1403) (Streptococcus lactis).